A 490-amino-acid chain; its full sequence is Bifunctional protein HldE (490 aa).

Residues 1–330 are ribokinase; sequence MSRFDTLLQS…RKILPHASLA (330 aa). 205-208 is an ATP binding site; sequence NRKE. Residue Asp-275 is part of the active site. The tract at residues 358–490 is cytidylyltransferase; that stretch reads FTNGCFDILH…LVEKAREGTT (133 aa).

It in the N-terminal section; belongs to the carbohydrate kinase PfkB family. The protein in the C-terminal section; belongs to the cytidylyltransferase family. Homodimer.

The enzyme catalyses D-glycero-beta-D-manno-heptose 7-phosphate + ATP = D-glycero-beta-D-manno-heptose 1,7-bisphosphate + ADP + H(+). It carries out the reaction D-glycero-beta-D-manno-heptose 1-phosphate + ATP + H(+) = ADP-D-glycero-beta-D-manno-heptose + diphosphate. Its pathway is nucleotide-sugar biosynthesis; ADP-L-glycero-beta-D-manno-heptose biosynthesis; ADP-L-glycero-beta-D-manno-heptose from D-glycero-beta-D-manno-heptose 7-phosphate: step 1/4. The protein operates within nucleotide-sugar biosynthesis; ADP-L-glycero-beta-D-manno-heptose biosynthesis; ADP-L-glycero-beta-D-manno-heptose from D-glycero-beta-D-manno-heptose 7-phosphate: step 3/4. Its function is as follows. Catalyzes the phosphorylation of D-glycero-D-manno-heptose 7-phosphate at the C-1 position to selectively form D-glycero-beta-D-manno-heptose-1,7-bisphosphate. In terms of biological role, catalyzes the ADP transfer from ATP to D-glycero-beta-D-manno-heptose 1-phosphate, yielding ADP-D-glycero-beta-D-manno-heptose. This chain is Bifunctional protein HldE, found in Rhodopseudomonas palustris (strain BisB5).